We begin with the raw amino-acid sequence, 368 residues long: tRNA 2-selenouridine synthase (368 aa).

The Rhodanese domain maps to 15–138 (FLNQHPIMDV…MRQYLIGVIE (124 aa)). Cys98 acts as the S-selanylcysteine intermediate in catalysis.

This sequence belongs to the SelU family. Monomer.

The catalysed reaction is 5-methylaminomethyl-2-thiouridine(34) in tRNA + selenophosphate + (2E)-geranyl diphosphate + H2O + H(+) = 5-methylaminomethyl-2-selenouridine(34) in tRNA + (2E)-thiogeraniol + phosphate + diphosphate. It catalyses the reaction 5-methylaminomethyl-2-thiouridine(34) in tRNA + (2E)-geranyl diphosphate = 5-methylaminomethyl-S-(2E)-geranyl-thiouridine(34) in tRNA + diphosphate. It carries out the reaction 5-methylaminomethyl-S-(2E)-geranyl-thiouridine(34) in tRNA + selenophosphate + H(+) = 5-methylaminomethyl-2-(Se-phospho)selenouridine(34) in tRNA + (2E)-thiogeraniol. The enzyme catalyses 5-methylaminomethyl-2-(Se-phospho)selenouridine(34) in tRNA + H2O = 5-methylaminomethyl-2-selenouridine(34) in tRNA + phosphate. Functionally, involved in the post-transcriptional modification of the uridine at the wobble position (U34) of tRNA(Lys), tRNA(Glu) and tRNA(Gln). Catalyzes the conversion of 2-thiouridine (S2U-RNA) to 2-selenouridine (Se2U-RNA). Acts in a two-step process involving geranylation of 2-thiouridine (S2U) to S-geranyl-2-thiouridine (geS2U) and subsequent selenation of the latter derivative to 2-selenouridine (Se2U) in the tRNA chain. This is tRNA 2-selenouridine synthase from Shewanella baltica (strain OS155 / ATCC BAA-1091).